A 301-amino-acid polypeptide reads, in one-letter code: 4-hydroxybenzoate octaprenyltransferase (301 aa).

8 helical membrane passes run 34 to 54 (IGSLLLLWPTWWALWLAADGL), 57 to 77 (LWTLLVFTAGVWLTRSAGCVI), 108 to 128 (LWVFVVLMLVAFALVLTLNWL), 152 to 172 (LPQVYLGMAFGWGIPMAFAAV), 176 to 196 (VPLLGWLLYAANILWATAYDT), 221 to 241 (FDLIAQGILYALMAATLVLVG), 245 to 265 (DLGVAYWAGLAVAALLVAYEF), and 279 to 299 (AFLHNNWVGLAIFVGIAVAVA).

It belongs to the UbiA prenyltransferase family. It depends on Mg(2+) as a cofactor.

The protein resides in the cell inner membrane. The catalysed reaction is all-trans-octaprenyl diphosphate + 4-hydroxybenzoate = 4-hydroxy-3-(all-trans-octaprenyl)benzoate + diphosphate. It participates in cofactor biosynthesis; ubiquinone biosynthesis. Its function is as follows. Catalyzes the prenylation of para-hydroxybenzoate (PHB) with an all-trans polyprenyl group. Mediates the second step in the final reaction sequence of ubiquinone-8 (UQ-8) biosynthesis, which is the condensation of the polyisoprenoid side chain with PHB, generating the first membrane-bound Q intermediate 3-octaprenyl-4-hydroxybenzoate. This chain is 4-hydroxybenzoate octaprenyltransferase, found in Xanthomonas euvesicatoria pv. vesicatoria (strain 85-10) (Xanthomonas campestris pv. vesicatoria).